Here is a 156-residue protein sequence, read N- to C-terminus: MAAGSITTLPALSGDGGGGGAFPPGHFKDPKRLYCKNGGFFLRIHPDGRVDGIREKSDPNIKLQLQAEERGVVSIKGVCANRYLAMKEDGRLLALKYVTEECFFFERLESNNYNTYRSRKYSNWYVALKRTGQYKLGSKTGPGQKAILFLPMSAKS.

Residues 1–9 (MAAGSITTL) constitute a propeptide that is removed on maturation. N37 provides a ligand contact to heparin. Y83 is subject to Phosphotyrosine; by TEC. A Glycyl lysine isopeptide (Lys-Gly) (interchain with G-Cter in SUMO1) cross-link involves residue K96. Positions 129–145 (KRTGQYKLGSKTGPGQK) are heparin-binding.

Belongs to the heparin-binding growth factors family. As to quaternary structure, monomer. Homodimer. Interacts with FGFR1, FGFR2, FGFR3 and FGFR4. Affinity between fibroblast growth factors (FGFs) and their receptors is increased by heparan sulfate glycosaminoglycans that function as coreceptors. Interacts with CSPG4, FGFBP1 and TEC. Found in a complex with FGFBP1, FGF1 and FGF2. Interacts with FGFBP3. Interacts with integrin ITGAV:ITGB3; the interaction is required for FGF2 signaling. Interacts with SNORC (via the extracellular domain). Interacts with glypican GPC3. Phosphorylation at Tyr-83 regulates FGF2 unconventional secretion.

It is found in the secreted. It localises to the nucleus. Acts as a ligand for FGFR1, FGFR2, FGFR3 and FGFR4. Also acts as an integrin ligand which is required for FGF2 signaling. Binds to integrin ITGAV:ITGB3. Plays an important role in the regulation of cell survival, cell division, cell differentiation and cell migration. Functions as a potent mitogen in vitro. Can induce angiogenesis. Mediates phosphorylation of ERK1/2 and thereby promotes retinal lens fiber differentiation. The protein is Fibroblast growth factor 2 (FGF2) of Monodelphis domestica (Gray short-tailed opossum).